The chain runs to 184 residues: MGLCSDRWITRMSREHGMIEPFEDRQVRQGVISYGVSSYGYDMRVAREFKIFTNVLSSVVDPKAFDPKSFVEFEGDVCIVPPNSFALARSVEYFRIPRNVLTLTVGKSTYARCGIITNVTPFEPEWEGYVTLEISNTTPLPAKIYANEGIAQVVFFTGDEPPEVSYGDKKGKYQGQHGVTLPRI.

DCTP contacts are provided by residues 107–112 (KSTYAR), 131–133 (TLE), Q152, Y166, and Q176. E133 serves as the catalytic Proton donor/acceptor.

It belongs to the dCTP deaminase family. Homotrimer.

It catalyses the reaction dCTP + H2O + H(+) = dUTP + NH4(+). The protein operates within pyrimidine metabolism; dUMP biosynthesis; dUMP from dCTP (dUTP route): step 1/2. Its function is as follows. Catalyzes the deamination of dCTP to dUTP. The polypeptide is dCTP deaminase (Gemmatimonas aurantiaca (strain DSM 14586 / JCM 11422 / NBRC 100505 / T-27)).